The chain runs to 755 residues: Kojibiose phosphorylase (755 aa).

333-334 (WD) contributes to the substrate binding site. The Proton donor role is filled by glutamate 473. 573 to 574 (KQ) contributes to the substrate binding site.

The protein belongs to the glycosyl hydrolase 65 family.

The enzyme catalyses kojibiose + phosphate = beta-D-glucose 1-phosphate + D-glucose. In vitro catalyzes the phosphorolysis of D-kojibiose into beta-D-glucose 1-phosphate and D-glucose. No other disaccharides tested substitute for D-kojibiose. In the reverse direction disaccharides can be formed from beta-D-glucose 1-phosphate plus D-glucose, L-sorbose, D-sorbitol, L-iditol or 1,5-anhydro-D-glucitol, but with low efficiency. The beta-D-glucose 1-phosphate product is the substrate for YcjU (AC P77366), the next apparent enzyme in the putative biochemical pathway encoded in this locus (yjcM to ycjW). The polypeptide is Kojibiose phosphorylase (ycjT) (Escherichia coli (strain K12)).